The following is a 134-amino-acid chain: MNYFAVALGGFFGAIAREITGRALGTSIFPVGTLAINLSGSFLLLFFMTLFLERINVSDPVRLGLTSGFLGAYTTFSTMTKEIYLLLFQSKLLIGFAYLFLSLSGGFLSGILGRALALYLVNLNFRKNGAKDEG.

Transmembrane regions (helical) follow at residues 1–21 (MNYFAVALGGFFGAIAREITG), 28–48 (IFPVGTLAINLSGSFLLLFFM), 68–88 (GFLGAYTTFSTMTKEIYLLLF), and 92–112 (LLIGFAYLFLSLSGGFLSGIL). Residues G71 and T74 each coordinate Na(+).

The protein belongs to the fluoride channel Fluc/FEX (TC 1.A.43) family.

The protein resides in the cell membrane. The catalysed reaction is fluoride(in) = fluoride(out). Its activity is regulated as follows. Na(+) is not transported, but it plays an essential structural role and its presence is essential for fluoride channel function. Its function is as follows. Fluoride-specific ion channel. Important for reducing fluoride concentration in the cell, thus reducing its toxicity. The protein is Fluoride-specific ion channel FluC 2 of Carboxydothermus hydrogenoformans (strain ATCC BAA-161 / DSM 6008 / Z-2901).